The chain runs to 513 residues: 2-isopropylmalate synthase (513 aa).

Positions 5-268 (LIIFDTTLRD…DIGVDTTQIV (264 aa)) constitute a Pyruvate carboxyltransferase domain. Mn(2+) contacts are provided by aspartate 14, histidine 202, histidine 204, and asparagine 239. Residues 394-513 (RFISLSQRSE…KAVQKINPQI (120 aa)) form a regulatory domain region.

It belongs to the alpha-IPM synthase/homocitrate synthase family. LeuA type 1 subfamily. In terms of assembly, homodimer. Mn(2+) serves as cofactor.

It localises to the cytoplasm. It catalyses the reaction 3-methyl-2-oxobutanoate + acetyl-CoA + H2O = (2S)-2-isopropylmalate + CoA + H(+). It participates in amino-acid biosynthesis; L-leucine biosynthesis; L-leucine from 3-methyl-2-oxobutanoate: step 1/4. Its function is as follows. Catalyzes the condensation of the acetyl group of acetyl-CoA with 3-methyl-2-oxobutanoate (2-ketoisovalerate) to form 3-carboxy-3-hydroxy-4-methylpentanoate (2-isopropylmalate). The polypeptide is 2-isopropylmalate synthase (Cupriavidus necator (strain ATCC 17699 / DSM 428 / KCTC 22496 / NCIMB 10442 / H16 / Stanier 337) (Ralstonia eutropha)).